The primary structure comprises 390 residues: Terminal nucleotidyltransferase 5C (390 aa).

Belongs to the TENT family.

The protein localises to the nucleus. The protein resides in the cytoplasm. It is found in the cytoskeleton. It localises to the microtubule organizing center. Its subcellular location is the centrosome. It catalyses the reaction RNA(n) + ATP = RNA(n)-3'-adenine ribonucleotide + diphosphate. Catalyzes the transfer of one adenosine molecule from an ATP to an mRNA poly(A) tail bearing a 3'-OH terminal group and enhances mRNA stability and gene expression. The chain is Terminal nucleotidyltransferase 5C from Gallus gallus (Chicken).